The primary structure comprises 58 residues: UPF0434 protein NT01EI_2448 (58 aa).

It belongs to the UPF0434 family.

In Edwardsiella ictaluri (strain 93-146), this protein is UPF0434 protein NT01EI_2448.